The following is a 313-amino-acid chain: Ribosomal RNA small subunit methyltransferase H (313 aa).

Residues glycine 35 to histidine 37, aspartate 55, phenylalanine 79, aspartate 101, and glutamine 108 each bind S-adenosyl-L-methionine.

It belongs to the methyltransferase superfamily. RsmH family.

The protein localises to the cytoplasm. It catalyses the reaction cytidine(1402) in 16S rRNA + S-adenosyl-L-methionine = N(4)-methylcytidine(1402) in 16S rRNA + S-adenosyl-L-homocysteine + H(+). Functionally, specifically methylates the N4 position of cytidine in position 1402 (C1402) of 16S rRNA. This is Ribosomal RNA small subunit methyltransferase H from Salmonella newport (strain SL254).